Here is a 347-residue protein sequence, read N- to C-terminus: GMP reductase (347 aa).

Position 108–131 (108–131) interacts with NADP(+); sequence ADFEKTKQILDLNPALNFVCIDVA. Glycine 181 and glycine 183 together coordinate K(+). Cysteine 186 (thioimidate intermediate) is an active-site residue. 216-239 contributes to the NADP(+) binding site; that stretch reads IVSDGGCTTPGDVAKAFGGGADFV.

This sequence belongs to the IMPDH/GMPR family. GuaC type 1 subfamily. As to quaternary structure, homotetramer.

The enzyme catalyses IMP + NH4(+) + NADP(+) = GMP + NADPH + 2 H(+). Catalyzes the irreversible NADPH-dependent deamination of GMP to IMP. It functions in the conversion of nucleobase, nucleoside and nucleotide derivatives of G to A nucleotides, and in maintaining the intracellular balance of A and G nucleotides. This chain is GMP reductase, found in Escherichia coli (strain SMS-3-5 / SECEC).